Here is a 507-residue protein sequence, read N- to C-terminus: Peroxisomal membrane protein PEX14 (507 aa).

Composition is skewed to polar residues over residues 1-10 (MATHQQTQPP) and 32-48 (EVQQ…SVFK). The disordered stretch occupies residues 1 to 52 (MATHQQTQPPSDFPALADENSQIPEATKPANEVQQATIAQDPPTSVFKNSEP). The Peroxisomal segment spans residues 1-152 (MATHQQTQPP…QAAFLSRFRW (152 aa)). 2 involved in interaction with PEX5 regions span residues 58 to 65 (IQNAIKFL) and 78 to 97 (RRSF…EAFR). The chain crosses the membrane as a helical span at residues 153 to 173 (YHAILAVGVLAASGAGTAVFI). The Cytoplasmic portion of the chain corresponds to 174 to 507 (KRSLIPRFKS…EQQHISQEGN (334 aa)). Residues 288-302 (VTTARKPYTNGSNVD) show a composition bias toward polar residues. Disordered stretches follow at residues 288–329 (VTTA…PKSY), 344–394 (NIRE…NPRS), 409–435 (ANQN…QPPP), and 448–507 (PKPQ…QEGN). Positions 308–322 (ARSASPPAAPADSSA) are enriched in low complexity. Residues 378 to 394 (QDESSNGQWWQQKNPRS) show a composition bias toward polar residues.

This sequence belongs to the peroxin-14 family. In terms of assembly, interacts with PEX13; forming the PEX13-PEX14 docking complex. Interacts with PEX5 (via WxxxF/Y motifs). Expressed in flowers, siliques, leaves and roots.

Its subcellular location is the peroxisome membrane. Functionally, component of the PEX13-PEX14 docking complex, a translocon channel that specifically mediates the import of peroxisomal cargo proteins bound to PEX5 receptor. The PEX13-PEX14 docking complex forms a large import pore which can be opened to a diameter of about 9 nm. Mechanistically, PEX5 receptor along with cargo proteins associates with the PEX14 subunit of the PEX13-PEX14 docking complex in the cytosol, leading to the insertion of the receptor into the organelle membrane with the concomitant translocation of the cargo into the peroxisome matrix. The chain is Peroxisomal membrane protein PEX14 from Arabidopsis thaliana (Mouse-ear cress).